A 384-amino-acid chain; its full sequence is Probable inactive patatin-like protein 9 (384 aa).

The PNPLA domain occupies Leu-33 to Val-234. A GXGXXG motif is present at residues Gly-37–Gly-42. The active-site Proton acceptor is Asp-221. The DGA/G signature appears at Asp-221–Gly-223. Positions Gly-363–Arg-384 are disordered.

It belongs to the patatin family. Highly expressed in roots and at lower levels in flowers and siliques.

In Arabidopsis thaliana (Mouse-ear cress), this protein is Probable inactive patatin-like protein 9 (PLP9).